The sequence spans 85 residues: MAHKKGVGSSKNGRESHSKRLGVKVFGGEICKAGDILVRQRGTKHHPGNNVGIGKDHTLYSLIEGRVIFRKKQENRSYVSVEIIA.

It belongs to the bacterial ribosomal protein bL27 family.

The chain is Large ribosomal subunit protein bL27 from Azobacteroides pseudotrichonymphae genomovar. CFP2.